The following is a 353-amino-acid chain: MESAIGEHLQCPRTLTRRVPDTYTPPFPMWVGRADDTLHQVVMGYLGVQFRGEDQRPAALRAMRDIVAGFDLPDGPAHHDLTHHIDNQGYENLIVVGYWKDVSSQHRWSTSPPVSSWWESEDRLSDGLGFFREIVAPRAEQFETLYAFQDDLPGVGAVMDGVSGEINEHGYWGSMRERFPISQTDWMQASGELRVVAGDPAVGGRVVVRGHDNIALIRSGQDWADAEADERSLYLDEILPTLQSGMDFLRDNGPAVGCYSNRFVRNIDIDGNFLDLSYNIGHWASLDQLERWSESHPTHLRIFTTFFRVAEGLSKLRLYHEVSVFDAADQLYEYINCHPGTGMLRDAVITAEH.

Position 219 (Ser219) interacts with an aliphatic aldoxime. A heme b-binding site is contributed by His299. An an aliphatic aldoxime-binding site is contributed by His320. His320 is a catalytic residue.

The protein belongs to the heme-containing dehydratase family. In terms of assembly, homodimer. It depends on heme b as a cofactor.

The enzyme catalyses an aliphatic aldoxime = a nitrile + H2O. With respect to regulation, active when the heme iron is in the ferrous state. Activated by FMN, Fe(2+), Sn(2+), Na(2)SO(3), Na(2)S and vitamin K3. Its function is as follows. Catalyzes the dehydration of aldoximes to their corresponding nitrile. Is active toward various arylalkyl- and alkyl-aldoximes, and to a lesser extent toward aryl-aldoximes. In Rhodococcus globerulus, this protein is Aliphatic aldoxime dehydratase.